Consider the following 262-residue polypeptide: NAC domain-containing protein 71 (262 aa).

In terms of domain architecture, NAC spans 6-160 (LPPGFRFHPT…AFALCRVVKK (155 aa)). The DNA-binding element occupies 107–166 (AGYRKTLVFYEGRAPLGDRTNWFMHEYRLCDIDDHSQKSPNFKGAFALCRVVKKNELKKN).

It localises to the nucleus. Its function is as follows. Transcription factor involved in tissue reunion of wounded inflorescence stems. Required for the division of pith cells in the reunion process, which is dependent on polar-transported auxin and the wound-inducible hormones ethylene and jasmonate. Binds to the promoters of XTH19 and XTH20 to induce their expression via auxin signaling. XTH19 and XTH20 are involved in cell proliferation in the tissue reunion process of incised stems. Involved in hypocotyl graft union formation. Required for the auxin- mediated promotion of vascular tissue proliferation during hypocotyl graft attachment. This Arabidopsis thaliana (Mouse-ear cress) protein is NAC domain-containing protein 71.